The primary structure comprises 265 residues: Protein Msed_2121 (265 aa).

This sequence belongs to the CinA family.

The chain is Protein Msed_2121 from Metallosphaera sedula (strain ATCC 51363 / DSM 5348 / JCM 9185 / NBRC 15509 / TH2).